Consider the following 273-residue polypeptide: 4-hydroxy-tetrahydrodipicolinate reductase (273 aa).

NAD(+) is bound by residues 12–17 (GAGGRM) and Glu38. NADP(+) is bound at residue Arg39. Residues 102–104 (GTT) and 126–129 (AANF) each bind NAD(+). His159 serves as the catalytic Proton donor/acceptor. (S)-2,3,4,5-tetrahydrodipicolinate is bound at residue His160. The Proton donor role is filled by Lys163. Residue 169 to 170 (GT) coordinates (S)-2,3,4,5-tetrahydrodipicolinate.

Belongs to the DapB family. As to quaternary structure, homotetramer.

It localises to the cytoplasm. The enzyme catalyses (S)-2,3,4,5-tetrahydrodipicolinate + NAD(+) + H2O = (2S,4S)-4-hydroxy-2,3,4,5-tetrahydrodipicolinate + NADH + H(+). It catalyses the reaction (S)-2,3,4,5-tetrahydrodipicolinate + NADP(+) + H2O = (2S,4S)-4-hydroxy-2,3,4,5-tetrahydrodipicolinate + NADPH + H(+). The protein operates within amino-acid biosynthesis; L-lysine biosynthesis via DAP pathway; (S)-tetrahydrodipicolinate from L-aspartate: step 4/4. Catalyzes the conversion of 4-hydroxy-tetrahydrodipicolinate (HTPA) to tetrahydrodipicolinate. The sequence is that of 4-hydroxy-tetrahydrodipicolinate reductase from Escherichia coli O139:H28 (strain E24377A / ETEC).